The chain runs to 358 residues: Peptide chain release factor 1 (358 aa).

Gln-234 bears the N5-methylglutamine mark.

The protein belongs to the prokaryotic/mitochondrial release factor family. In terms of processing, methylated by PrmC. Methylation increases the termination efficiency of RF1.

The protein resides in the cytoplasm. Peptide chain release factor 1 directs the termination of translation in response to the peptide chain termination codons UAG and UAA. This Leifsonia xyli subsp. xyli (strain CTCB07) protein is Peptide chain release factor 1.